Here is a 318-residue protein sequence, read N- to C-terminus: tRNA-modifying protein YgfZ (318 aa).

Folate is bound by residues Trp28 and Trp182.

Belongs to the tRNA-modifying YgfZ family.

It is found in the cytoplasm. In terms of biological role, folate-binding protein involved in regulating the level of ATP-DnaA and in the modification of some tRNAs. It is probably a key factor in regulatory networks that act via tRNA modification, such as initiation of chromosomal replication. This chain is tRNA-modifying protein YgfZ, found in Aliivibrio fischeri (strain ATCC 700601 / ES114) (Vibrio fischeri).